Reading from the N-terminus, the 579-residue chain is DELLA protein GAIP (579 aa).

The segment at 1–25 is disordered; that stretch reads MKREHHYLHPRPEPPSVATGSNRES. Residues 46–50 carry the DELLA motif motif; that stretch reads DELLA. Positions 202-570 constitute a GRAS domain; the sequence is VDSQENGIQL…RPLIATSAWK (369 aa). The tract at residues 209-263 is leucine repeat I (LRI); that stretch reads IQLVHALMVCAEAVQQNNLNLAEALVKRIDYLAVSQAGAMRKVATFFAEALARRI. The tract at residues 281 to 346 is VHIID; it reads QMHFYESCPY…SGPPTFRLTG (66 aa). The short motif at 312–316 is the VHIID element; the sequence is VHVID. The segment at 360–392 is leucine repeat II (LRII); it reads DVGWKLVKFAETLHVEFEYRGFVANSLADLDAS. Residues 404 to 491 form a PFYRE region; it reads VVVNSVFELH…EMYLGKQICN (88 aa). The LXXLL motif signature appears at 412–416; sequence LHQLL. Positions 494–570 are SAW; that stretch reads ACEGADRVER…RPLIATSAWK (77 aa).

Belongs to the GRAS family. DELLA subfamily. Phosphorylated. In terms of processing, ubiquitinated. Upon GA application it is ubiquitinated, leading to its subsequent degradation.

It is found in the nucleus. Probable transcriptional regulator that acts as a repressor of the gibberellin (GA) signaling pathway. Probably acts by participating in large multiprotein complexes that represses transcription of GA-inducible genes. Upon GA application, it is degraded by the proteasome, allowing the GA signaling pathway. This Cucurbita maxima (Pumpkin) protein is DELLA protein GAIP (GAIP).